The following is a 486-amino-acid chain: 6-phosphogluconate dehydrogenase, decarboxylating 2 (486 aa).

Residues 12–17, 35–37, 79–81, and asparagine 107 contribute to the NADP(+) site; these read GLAVMG, NRT, and VKA. Substrate-binding positions include asparagine 107 and 133 to 135; that span reads SGG. Lysine 188 (proton acceptor) is an active-site residue. Residue 191 to 192 coordinates substrate; it reads HN. Glutamate 195 acts as the Proton donor in catalysis. Tyrosine 196, lysine 266, arginine 293, arginine 456, and histidine 462 together coordinate substrate. The Microbody targeting signal signature appears at 484-486; sequence SKI.

This sequence belongs to the 6-phosphogluconate dehydrogenase family. In terms of assembly, forms homodimer. Forms heterodimers with PGD1 or PGD3.

The protein localises to the cytoplasm. Its subcellular location is the cytosol. It localises to the peroxisome. The enzyme catalyses 6-phospho-D-gluconate + NADP(+) = D-ribulose 5-phosphate + CO2 + NADPH. It participates in carbohydrate degradation; pentose phosphate pathway; D-ribulose 5-phosphate from D-glucose 6-phosphate (oxidative stage): step 3/3. In terms of biological role, catalyzes the oxidative decarboxylation of 6-phosphogluconate to ribulose 5-phosphate and CO(2), with concomitant reduction of NADP to NADPH. Required for guided growth of the male gametophytes and interaction between the pollen tube and the ovule. This chain is 6-phosphogluconate dehydrogenase, decarboxylating 2, found in Arabidopsis thaliana (Mouse-ear cress).